Consider the following 357-residue polypeptide: Probable nitronate monooxygenase (357 aa).

FMN is bound by residues Asn71, Gln175, Gly180, Gly219, and 238-241 (QMGT).

The protein belongs to the nitronate monooxygenase family. NMO class I subfamily. FMN is required as a cofactor.

It catalyses the reaction 3 propionate 3-nitronate + 3 O2 + H2O = 3 3-oxopropanoate + 2 nitrate + nitrite + H2O2 + 3 H(+). Nitronate monooxygenase that uses molecular oxygen to catalyze the oxidative denitrification of alkyl nitronates. Acts on propionate 3-nitronate (P3N), the presumed physiological substrate. Probably functions in the detoxification of P3N, a metabolic poison produced by plants and fungi as a defense mechanism. The sequence is that of Probable nitronate monooxygenase from Staphylococcus haemolyticus (strain JCSC1435).